Consider the following 345-residue polypeptide: uncharacterized protein (345 aa).

In terms of domain architecture, CNNM transmembrane spans 1–198 (MDVLSAVLLA…LSEGLLDHEE (198 aa)). The next 2 helical transmembrane spans lie at 3–23 (VLSA…FVGA) and 95–115 (VPPA…HVLL). CBS domains follow at residues 217-280 (AVPL…PQTV) and 285-342 (VVRP…MRDG). A helical membrane pass occupies residues 312-332 (LALVTADNGSVVGMVALEDVV).

It belongs to the TerC family.

Its subcellular location is the cell membrane. This is an uncharacterized protein from Mycobacterium tuberculosis (strain CDC 1551 / Oshkosh).